A 271-amino-acid polypeptide reads, in one-letter code: MKDEKIAKKKLTINDIKNKKGAEPIVMITAYDALFAKIFDDYADVILVGDSLNMSFNMKESTLSADMSTMLYHTKAVCTGAKKSFILADMPFGSYTNEKQAIKNAMKFFKQTNADAVKLEVGMHQVNLVKRLCEEGINVMAHIGLKPQFFKFEGGYKIKGKSELEAKRLVEEALAFEQAGAFGILLEGTLSNVASEITRQVRVPVVGIGSGADVDGQVLVWSDMLGFFEDFKPKFVKRYLDGAALVRKGVQSYASEVKNKIFPSEEFSYKG.

Mg(2+) is bound by residues Asp50 and Asp89. 3-methyl-2-oxobutanoate is bound by residues 50 to 51, Asp89, and Lys118; that span reads DS. Glu120 provides a ligand contact to Mg(2+). Glu187 functions as the Proton acceptor in the catalytic mechanism.

The protein belongs to the PanB family. As to quaternary structure, homodecamer; pentamer of dimers. The cofactor is Mg(2+).

Its subcellular location is the cytoplasm. It carries out the reaction 3-methyl-2-oxobutanoate + (6R)-5,10-methylene-5,6,7,8-tetrahydrofolate + H2O = 2-dehydropantoate + (6S)-5,6,7,8-tetrahydrofolate. The protein operates within cofactor biosynthesis; (R)-pantothenate biosynthesis; (R)-pantoate from 3-methyl-2-oxobutanoate: step 1/2. Its function is as follows. Catalyzes the reversible reaction in which hydroxymethyl group from 5,10-methylenetetrahydrofolate is transferred onto alpha-ketoisovalerate to form ketopantoate. This chain is 3-methyl-2-oxobutanoate hydroxymethyltransferase, found in Campylobacter concisus (strain 13826).